A 286-amino-acid chain; its full sequence is MAGAKEIKTKIASVKNTQKITSAMEMVAASKMRRAQERMAASRPYAESMRKVIGHVAQGSLEFKHPYLEVREAKRVGYIVVATDRGLCGGLNVNLFKKVTLDVKNWKAQGAEVEFCPIGARSVQFFKSFGGQVSAHASGLGDAPKLADLIGTVRVMLQAYNEGKLDRLYVVFNKFVNTMAQTPVIEQLLPLPKSADDVKTNRWDYIYEPDPKEILETLLVRYVESQVYQGVIENLASEQAARMVAMKAATDNAGDMIDGLQLVYNKARQAAITQELSEIVSGASAV.

It belongs to the ATPase gamma chain family. In terms of assembly, F-type ATPases have 2 components, CF(1) - the catalytic core - and CF(0) - the membrane proton channel. CF(1) has five subunits: alpha(3), beta(3), gamma(1), delta(1), epsilon(1). CF(0) has three main subunits: a, b and c.

It localises to the cell inner membrane. Produces ATP from ADP in the presence of a proton gradient across the membrane. The gamma chain is believed to be important in regulating ATPase activity and the flow of protons through the CF(0) complex. The polypeptide is ATP synthase gamma chain (Shewanella denitrificans (strain OS217 / ATCC BAA-1090 / DSM 15013)).